We begin with the raw amino-acid sequence, 174 residues long: Ribosome maturation factor RimM (174 aa).

Residues 97 to 173 (GNKFYFHEVI…DLPVGLVEMY (77 aa)) enclose the PRC barrel domain.

It belongs to the RimM family. Binds ribosomal protein uS19.

Its subcellular location is the cytoplasm. An accessory protein needed during the final step in the assembly of 30S ribosomal subunit, possibly for assembly of the head region. Essential for efficient processing of 16S rRNA. May be needed both before and after RbfA during the maturation of 16S rRNA. It has affinity for free ribosomal 30S subunits but not for 70S ribosomes. The polypeptide is Ribosome maturation factor RimM (Flavobacterium johnsoniae (strain ATCC 17061 / DSM 2064 / JCM 8514 / BCRC 14874 / CCUG 350202 / NBRC 14942 / NCIMB 11054 / UW101) (Cytophaga johnsonae)).